Reading from the N-terminus, the 429-residue chain is Cholesterol 7-desaturase nvd (429 aa).

Residues 23 to 43 (FVICLWTLAVTFIRIYWIFFV) traverse the membrane as a helical segment. In terms of domain architecture, Rieske spans 98-201 (YGILKSSQLK…SQEVDGFIFI (104 aa)). Positions 138, 140, 158, and 161 each coordinate [2Fe-2S] cluster.

It belongs to the cholesterol 7-desaturase family. It depends on [2Fe-2S] cluster as a cofactor. As to expression, expressed predominantly in the prothoracic gland and weakly in brain and malpighian tubules.

Its subcellular location is the membrane. The enzyme catalyses cholesterol + NADPH + O2 + H(+) = 7-dehydrocholesterol + NADP(+) + 2 H2O. It carries out the reaction cholesterol + NADH + O2 + H(+) = 7-dehydrocholesterol + NAD(+) + 2 H2O. It functions in the pathway steroid hormone biosynthesis; dafachronic acid biosynthesis. Catalyzes the production of 7-dehydrocholesterol (7-DHC or cholesta-5,7-dien-3beta-ol) by inserting a double bond (desaturating) at the C7-C8 single bond of cholesterol. Essential regulator of steroid biosynthesis, as this reaction is the first step in the synthesis of the steroid hormone Delta(7)-dafachronic acid. Required for insect molting, metamorphosis and body growth throughout development via the regulation of ecdysteroid biosynthesis in the prothoracic gland. This chain is Cholesterol 7-desaturase nvd, found in Drosophila melanogaster (Fruit fly).